A 38-amino-acid polypeptide reads, in one-letter code: Large ribosomal subunit protein bL36 (38 aa).

It belongs to the bacterial ribosomal protein bL36 family.

In Streptococcus pneumoniae serotype 4 (strain ATCC BAA-334 / TIGR4), this protein is Large ribosomal subunit protein bL36 (rpmJ).